A 929-amino-acid polypeptide reads, in one-letter code: Protocadherin gamma-B3 (929 aa).

Residues 1 to 30 form the signal peptide; it reads MGNSSGWRGPAGQRRMLFLFLLSLLDQALS. Cadherin domains are found at residues 31–133, 134–242, 243–347, 348–452, 453–562, and 570–675; these read EPIR…PPTF, SQNI…PPVF, TQDM…APEI, TLAS…VPVF, HQAS…APLV, and EGSA…QPDL. Residues 31 to 691 lie on the Extracellular side of the membrane; sequence EPIRYAIPEE…SDPQAELQFH (661 aa). Residue asparagine 136 is glycosylated (N-linked (GlcNAc...) asparagine). 2 N-linked (GlcNAc...) asparagine glycosylation sites follow: asparagine 419 and asparagine 545. A helical membrane pass occupies residues 692 to 712; sequence LVVALALISVLFLLAVILAIS. Residues 713-929 lie on the Cytoplasmic side of the membrane; that stretch reads LRLRCSSRPA…KKKSGKKEKK (217 aa). Disordered stretches follow at residues 791 to 838 and 899 to 929; these read NDNP…WPNN and ATLTNAAGKRDGKAPAGGNGNKKKSGKKEKK. A compositionally biased stretch (basic residues) spans 919 to 929; it reads NKKKSGKKEKK.

The protein localises to the cell membrane. Its function is as follows. Potential calcium-dependent cell-adhesion protein. May be involved in the establishment and maintenance of specific neuronal connections in the brain. The chain is Protocadherin gamma-B3 (PCDHGB3) from Homo sapiens (Human).